We begin with the raw amino-acid sequence, 484 residues long: ATP synthase subunit beta (484 aa).

Residue 169–176 coordinates ATP; the sequence is GGAGVGKT.

Belongs to the ATPase alpha/beta chains family. F-type ATPases have 2 components, CF(1) - the catalytic core - and CF(0) - the membrane proton channel. CF(1) has five subunits: alpha(3), beta(3), gamma(1), delta(1), epsilon(1). CF(0) has three main subunits: a(1), b(2) and c(9-12). The alpha and beta chains form an alternating ring which encloses part of the gamma chain. CF(1) is attached to CF(0) by a central stalk formed by the gamma and epsilon chains, while a peripheral stalk is formed by the delta and b chains.

The protein resides in the cell membrane. The catalysed reaction is ATP + H2O + 4 H(+)(in) = ADP + phosphate + 5 H(+)(out). Functionally, produces ATP from ADP in the presence of a proton gradient across the membrane. The catalytic sites are hosted primarily by the beta subunits. This is ATP synthase subunit beta from Cutibacterium acnes (strain DSM 16379 / KPA171202) (Propionibacterium acnes).